The primary structure comprises 215 residues: Sodium channel regulatory subunit beta-2 (215 aa).

The first 29 residues, 1-29 (MHRDAWLPRPAFSLTGLSLFFSLVPPGRS), serve as a signal peptide directing secretion. At 30 to 157 (MEVTVPATLN…MEEPPERDST (128 aa)) the chain is on the extracellular side. In terms of domain architecture, Ig-like C2-type spans 32 to 154 (VTVPATLNVL…QVLMEEPPER (123 aa)). 3 N-linked (GlcNAc...) asparagine glycosylation sites follow: Asn42, Asn66, and Asn74. 2 disulfide bridges follow: Cys50–Cys127 and Cys72–Cys75. Residues 158–179 (VAVIVGASVGGFLAVVILVLMV) traverse the membrane as a helical segment. Over 180–215 (VKCVRRKKEQKLSTDDLKTEEEGKTDGEGNPDDGAK) the chain is Cytoplasmic. Residues 187–215 (KEQKLSTDDLKTEEEGKTDGEGNPDDGAK) are disordered. The segment covering 189–215 (QKLSTDDLKTEEEGKTDGEGNPDDGAK) has biased composition (basic and acidic residues). Ser192 bears the Phosphoserine mark. Thr204 is modified (phosphothreonine).

The protein belongs to the sodium channel auxiliary subunit SCN2B (TC 8.A.17) family. As to quaternary structure, a voltage-gated sodium (Nav) channel consists of an ion-conducting pore-forming alpha subunit functional on its own that is regulated by one or more beta subunits. The beta subunit SCN2B is disulfide-linked to the pore-forming alpha subunit. Interacts with SCN1A; regulatory subunit of SCN1A/Nav1.1. Interacts with SCN2A; regulatory subunit of SCN2A/Nav1.2. Interacts with SCN3A; regulatory subunit of SCN3A/Nav1.3. Interacts with SCN5A; regulatory subunit of SCN5A/Nav1.5. Interacts with SCN8A; regulatory subunit of SCN8A/Nav1.6. Interacts with SCN9A; regulatory subunit of SCN9A/Nav1.7. Interacts with SCN10A; regulatory subunit of SCN10A/Nav1.8. Interacts with TNR; may play a crucial role in clustering and regulation of activity of SCN2B-containing Nav channels at nodes of Ranvier.

It localises to the cell membrane. The protein localises to the cell projection. Its subcellular location is the axon. Functionally, regulatory subunit of multiple voltage-gated sodium (Nav) channels directly mediating the depolarization of excitable membranes. Navs, also called VGSCs (voltage-gated sodium channels) or VDSCs (voltage-dependent sodium channels), operate by switching between closed and open conformations depending on the voltage difference across the membrane. In the open conformation they allow Na(+) ions to selectively pass through the pore, along their electrochemical gradient. The influx of Na+ ions provokes membrane depolarization, initiating the propagation of electrical signals throughout cells and tissues. The accessory beta subunits participate in localization and functional modulation of the Nav channels. Modulates the activity of SCN1A/Nav1.1, SCN2A/Nav1.2, SCN2A/Nav1.3, SCN5A/Nav1.5, SCN8A/Nav1.6, SCN9A/Nav1.7 and SCN10A/Nav1.8. The protein is Sodium channel regulatory subunit beta-2 of Homo sapiens (Human).